The chain runs to 799 residues: Protein-lysine N-methyltransferase SMYD4 (799 aa).

Residue 112–114 (RSA) participates in S-adenosyl-L-methionine binding. An SET domain is found at 233-570 (LSVSLCTHPL…KGQEILHCYG (338 aa)). Residues cysteine 296, cysteine 299, cysteine 309, cysteine 312, cysteine 318, cysteine 322, histidine 331, and cysteine 335 each coordinate Zn(2+). The segment at 296–335 (CHRCLKHTLATVPCGSCSYAKYCSQECMQQAWDLYHSTEC) adopts an MYND-type zinc-finger fold. S-adenosyl-L-methionine contacts are provided by residues 535–536 (NH), tyrosine 569, and phenylalanine 591.

The protein belongs to the class V-like SAM-binding methyltransferase superfamily. As to quaternary structure, interacts (via MYND-type zinc finger) with HDAC1.

It localises to the nucleus. The protein resides in the cytoplasm. The catalysed reaction is L-lysyl-[protein] + S-adenosyl-L-methionine = N(6)-methyl-L-lysyl-[protein] + S-adenosyl-L-homocysteine + H(+). Functionally, protein-lysine N-methyltransferase. Monomethylates PRMT5, modulating its transcriptional activity. May also act as a histone methyltransferase. Plays a critical role in cardiac development. Acts as a key epigenetic regulator of gene expression during cardiac development via its dual activities as a methyltransferase and negative regulator of HDAC1. This Mus musculus (Mouse) protein is Protein-lysine N-methyltransferase SMYD4 (Smyd4).